Reading from the N-terminus, the 177-residue chain is ATP-dependent protease subunit HslV (177 aa).

The active site involves T7. Na(+)-binding residues include G162, C165, and T168.

It belongs to the peptidase T1B family. HslV subfamily. As to quaternary structure, a double ring-shaped homohexamer of HslV is capped on each side by a ring-shaped HslU homohexamer. The assembly of the HslU/HslV complex is dependent on binding of ATP.

Its subcellular location is the cytoplasm. It catalyses the reaction ATP-dependent cleavage of peptide bonds with broad specificity.. With respect to regulation, allosterically activated by HslU binding. In terms of biological role, protease subunit of a proteasome-like degradation complex believed to be a general protein degrading machinery. The polypeptide is ATP-dependent protease subunit HslV (Persephonella marina (strain DSM 14350 / EX-H1)).